The chain runs to 260 residues: Snake venom serine protease homolog 1 (260 aa).

Positions 1 to 18 (MVLIRVLANLLILQLSYA) are cleaved as a signal peptide. A propeptide spanning residues 19 to 24 (QKSSEL) is cleaved from the precursor. The Peptidase S1 domain maps to 25 to 251 (IIGGDECNIN…HLDWIKSIIA (227 aa)). 6 cysteine pairs are disulfide-bonded: cysteine 31–cysteine 165, cysteine 52–cysteine 68, cysteine 100–cysteine 258, cysteine 144–cysteine 212, cysteine 176–cysteine 191, and cysteine 202–cysteine 227. N-linked (GlcNAc...) asparagine glycans are attached at residues asparagine 83, asparagine 123, and asparagine 124.

It belongs to the peptidase S1 family. Snake venom subfamily. In terms of tissue distribution, expressed by the venom gland.

Its subcellular location is the secreted. Its function is as follows. Snake venom serine protease homolog that may act in the hemostasis system of the prey. This Trimeresurus stejnegeri (Chinese green tree viper) protein is Snake venom serine protease homolog 1.